The sequence spans 148 residues: Transcriptional regulator MraZ (148 aa).

SpoVT-AbrB domains lie at S5–V51 and A80–K123.

It belongs to the MraZ family. Forms oligomers.

The protein localises to the cytoplasm. It is found in the nucleoid. The polypeptide is Transcriptional regulator MraZ (Nitrosomonas eutropha (strain DSM 101675 / C91 / Nm57)).